Reading from the N-terminus, the 598-residue chain is Serine/threonine-protein kinase PLK1 (598 aa).

Residues 1–26 form a disordered region; that stretch reads MAQVAGKKLTVAPEAGKPPGIPGSSS. Ser-25 and Ser-26 each carry phosphoserine. The 253-residue stretch at 44-296 folds into the Protein kinase domain; the sequence is YLRGRFLGKG…IDDLLNDEFF (253 aa). Residues 50 to 58, Lys-73, and Glu-122 contribute to the ATP site; that span reads LGKGGFAKC. Asp-167 serves as the catalytic Proton acceptor. Residues 169-172 and Asp-185 each bind ATP; that span reads KLGN. Positions 185–212 are activation loop; it reads DFGLATKVEYDGERKKTLCGTPNYIAPE. Residue Thr-201 is modified to Phosphothreonine. A phosphoserine; by autocatalysis mark is found at Ser-260 and Ser-326. Positions 328-331 match the D-box that targets the protein for proteasomal degradation in anaphase motif; that stretch reads RKPL. Positions 336-360 are disordered; the sequence is KGQDSPLVEKQSVPAKEEEMQQPES. Ser-340 is subject to Phosphoserine. The region spanning 404–482 is the POLO box 1 domain; that stretch reads WVSKWVDYSD…LKYFRNYMSE (79 aa). Residues 487–501 are linker; the sequence is AGANITPREGDELAR. One can recognise a POLO box 2 domain in the interval 504–586; that stretch reads FLRTWFRTRS…ARTMVEKLQS (83 aa). The important for interaction with phosphorylated proteins stretch occupies residues 532 to 534; that stretch reads HTK.

This sequence belongs to the protein kinase superfamily. Ser/Thr protein kinase family. In terms of assembly, interacts with plk1 and kif2a. Interacts with fbxo5. Activated by phosphorylation on Thr-201 during M phase. Post-translationally, protein levels are down-regulated by proteasomal degradation in anaphase.

The protein localises to the nucleus. It localises to the cytoplasm. Its subcellular location is the cytoskeleton. It is found in the microtubule organizing center. The protein resides in the centrosome. The protein localises to the spindle. It localises to the midbody. The enzyme catalyses L-seryl-[protein] + ATP = O-phospho-L-seryl-[protein] + ADP + H(+). It carries out the reaction L-threonyl-[protein] + ATP = O-phospho-L-threonyl-[protein] + ADP + H(+). In terms of biological role, plays multiple essential roles during mitosis. Phosphorylates the N-terminal domain of cdc25, which leads to cyclin b-cdc2 activation and mitotic entry. Also required for organization of bipolar spindles, and for exit from mitosis. Phosphorylates tpx2. In Xenopus tropicalis (Western clawed frog), this protein is Serine/threonine-protein kinase PLK1 (plk1).